We begin with the raw amino-acid sequence, 215 residues long: Small ribosomal subunit protein uS7 (215 aa).

Belongs to the universal ribosomal protein uS7 family. In terms of assembly, part of the 30S ribosomal subunit.

Functionally, one of the primary rRNA binding proteins, it binds directly to 16S rRNA where it nucleates assembly of the head domain of the 30S subunit. Is located at the subunit interface close to the decoding center. In Thermococcus onnurineus (strain NA1), this protein is Small ribosomal subunit protein uS7.